The following is a 1331-amino-acid chain: uncharacterized protein (1331 aa).

8 consecutive transmembrane segments (helical) span residues 373–393 (VIGV…SLIV), 487–507 (ALFL…LILI), 534–554 (LLIF…SFGI), 579–599 (VVGL…ISLL), 653–673 (LVFL…SFAT), 1206–1226 (VIAV…TTLI), 1255–1275 (IPLF…LIAL), and 1297–1317 (AIGS…LNWL).

The protein belongs to the ABC-4 integral membrane protein family.

Its subcellular location is the cell membrane. This is an uncharacterized protein from Mycoplasma genitalium (strain ATCC 33530 / DSM 19775 / NCTC 10195 / G37) (Mycoplasmoides genitalium).